The sequence spans 116 residues: Large ribosomal subunit protein bL20 (116 aa).

The protein belongs to the bacterial ribosomal protein bL20 family.

Binds directly to 23S ribosomal RNA and is necessary for the in vitro assembly process of the 50S ribosomal subunit. It is not involved in the protein synthesizing functions of that subunit. In Thermosynechococcus vestitus (strain NIES-2133 / IAM M-273 / BP-1), this protein is Large ribosomal subunit protein bL20.